Consider the following 420-residue polypeptide: 3-isopropylmalate dehydratase large subunit (420 aa).

Positions 300, 360, and 363 each coordinate [4Fe-4S] cluster.

It belongs to the aconitase/IPM isomerase family. LeuC type 2 subfamily. Heterodimer of LeuC and LeuD. It depends on [4Fe-4S] cluster as a cofactor.

It carries out the reaction (2R,3S)-3-isopropylmalate = (2S)-2-isopropylmalate. It participates in amino-acid biosynthesis; L-leucine biosynthesis; L-leucine from 3-methyl-2-oxobutanoate: step 2/4. Catalyzes the isomerization between 2-isopropylmalate and 3-isopropylmalate, via the formation of 2-isopropylmaleate. This chain is 3-isopropylmalate dehydratase large subunit, found in Clostridium kluyveri (strain ATCC 8527 / DSM 555 / NBRC 12016 / NCIMB 10680 / K1).